We begin with the raw amino-acid sequence, 472 residues long: 3-isopropylmalate dehydratase large subunit (472 aa).

[4Fe-4S] cluster-binding residues include cysteine 347, cysteine 407, and cysteine 410.

This sequence belongs to the aconitase/IPM isomerase family. LeuC type 1 subfamily. Heterodimer of LeuC and LeuD. It depends on [4Fe-4S] cluster as a cofactor.

The enzyme catalyses (2R,3S)-3-isopropylmalate = (2S)-2-isopropylmalate. The protein operates within amino-acid biosynthesis; L-leucine biosynthesis; L-leucine from 3-methyl-2-oxobutanoate: step 2/4. In terms of biological role, catalyzes the isomerization between 2-isopropylmalate and 3-isopropylmalate, via the formation of 2-isopropylmaleate. The chain is 3-isopropylmalate dehydratase large subunit from Parasynechococcus marenigrum (strain WH8102).